A 312-amino-acid chain; its full sequence is Ribosomal RNA small subunit methyltransferase H (312 aa).

Residues 35 to 37 (GGH), Asp-55, Phe-79, Asp-101, and Gln-108 each bind S-adenosyl-L-methionine. Positions 286–306 (LKPSEHEVNENSRSRSSVLRV) are disordered. Basic and acidic residues predominate over residues 287–298 (KPSEHEVNENSR).

This sequence belongs to the methyltransferase superfamily. RsmH family.

The protein resides in the cytoplasm. It catalyses the reaction cytidine(1402) in 16S rRNA + S-adenosyl-L-methionine = N(4)-methylcytidine(1402) in 16S rRNA + S-adenosyl-L-homocysteine + H(+). In terms of biological role, specifically methylates the N4 position of cytidine in position 1402 (C1402) of 16S rRNA. In Aeromonas hydrophila subsp. hydrophila (strain ATCC 7966 / DSM 30187 / BCRC 13018 / CCUG 14551 / JCM 1027 / KCTC 2358 / NCIMB 9240 / NCTC 8049), this protein is Ribosomal RNA small subunit methyltransferase H.